We begin with the raw amino-acid sequence, 609 residues long: UvrABC system protein C (609 aa).

The 79-residue stretch at 16-94 (SSPGVYRMYD…IKQYMPKYNV (79 aa)) folds into the GIY-YIG domain. The UVR domain maps to 203 to 238 (HQVMSVLVGKMEQAASDMRYEQAALYRDQITALRRV).

It belongs to the UvrC family. In terms of assembly, interacts with UvrB in an incision complex.

It is found in the cytoplasm. Functionally, the UvrABC repair system catalyzes the recognition and processing of DNA lesions. UvrC both incises the 5' and 3' sides of the lesion. The N-terminal half is responsible for the 3' incision and the C-terminal half is responsible for the 5' incision. This chain is UvrABC system protein C, found in Shewanella halifaxensis (strain HAW-EB4).